The chain runs to 204 residues: Probable nicotinate-nucleotide adenylyltransferase (204 aa).

This sequence belongs to the NadD family.

The enzyme catalyses nicotinate beta-D-ribonucleotide + ATP + H(+) = deamido-NAD(+) + diphosphate. Its pathway is cofactor biosynthesis; NAD(+) biosynthesis; deamido-NAD(+) from nicotinate D-ribonucleotide: step 1/1. Its function is as follows. Catalyzes the reversible adenylation of nicotinate mononucleotide (NaMN) to nicotinic acid adenine dinucleotide (NaAD). The chain is Probable nicotinate-nucleotide adenylyltransferase from Clostridium beijerinckii (strain ATCC 51743 / NCIMB 8052) (Clostridium acetobutylicum).